Consider the following 174-residue polypeptide: Single-stranded DNA-binding protein 1 (174 aa).

Residues 6–111 (VNKVILVGNL…VVVNVGGTMQ (106 aa)) enclose the SSB domain. Residues 55-61 (WHRVVLF) mediate DNA binding. A disordered region spans residues 110 to 174 (MQMLGGRQGG…PMDFDDDIPF (65 aa)). Over residues 115 to 133 (GRQGGGAPAGGGQQQGGWG) the composition is skewed to gly residues. Over residues 134–160 (QPQQPQGGNQFSGGAQSRPQQQAPAAP) the composition is skewed to low complexity. Positions 169-174 (DDDIPF) match the Important for interaction with partner proteins motif.

Homotetramer. Binds PriA via its C-terminus.

Plays an important role in DNA replication, recombination and repair. Binds to ssDNA and to an array of partner proteins to recruit them to their sites of action during DNA metabolism. Stimulates the ATPase activity of PriA. One tetramer binds to 26 nucleotides (nt) of ssDNA, a 55 nt piece of ssDNA probably binds 2 tetramers. This is Single-stranded DNA-binding protein 1 from Klebsiella pneumoniae subsp. pneumoniae (strain ATCC 700721 / MGH 78578).